The chain runs to 373 residues: Dual-specificity RNA methyltransferase RlmN (373 aa).

Catalysis depends on E94, which acts as the Proton acceptor. The 240-residue stretch at 100 to 339 folds into the Radical SAM core domain; it reads EADRATLCVS…VIVRKTRGDD (240 aa). A disulfide bridge links C107 with C344. 3 residues coordinate [4Fe-4S] cluster: C114, C118, and C121. S-adenosyl-L-methionine-binding positions include 168 to 169, S200, 222 to 224, and N301; these read GE and SLH. The S-methylcysteine intermediate role is filled by C344.

It belongs to the radical SAM superfamily. RlmN family. [4Fe-4S] cluster serves as cofactor.

It localises to the cytoplasm. It catalyses the reaction adenosine(2503) in 23S rRNA + 2 reduced [2Fe-2S]-[ferredoxin] + 2 S-adenosyl-L-methionine = 2-methyladenosine(2503) in 23S rRNA + 5'-deoxyadenosine + L-methionine + 2 oxidized [2Fe-2S]-[ferredoxin] + S-adenosyl-L-homocysteine. The catalysed reaction is adenosine(37) in tRNA + 2 reduced [2Fe-2S]-[ferredoxin] + 2 S-adenosyl-L-methionine = 2-methyladenosine(37) in tRNA + 5'-deoxyadenosine + L-methionine + 2 oxidized [2Fe-2S]-[ferredoxin] + S-adenosyl-L-homocysteine. Functionally, specifically methylates position 2 of adenine 2503 in 23S rRNA and position 2 of adenine 37 in tRNAs. m2A2503 modification seems to play a crucial role in the proofreading step occurring at the peptidyl transferase center and thus would serve to optimize ribosomal fidelity. The chain is Dual-specificity RNA methyltransferase RlmN from Tolumonas auensis (strain DSM 9187 / NBRC 110442 / TA 4).